A 356-amino-acid chain; its full sequence is Phosphoribosyl pyrophosphate synthase-associated protein 1 (356 aa).

The residue at position 1 (M1) is an N-acetylmethionine. Phosphoserine is present on residues S177 and S215.

Belongs to the ribose-phosphate pyrophosphokinase family. In terms of assembly, binds to PRPS1 and PRPS2. Ubiquitous.

Functionally, seems to play a negative regulatory role in 5-phosphoribose 1-diphosphate synthesis. The polypeptide is Phosphoribosyl pyrophosphate synthase-associated protein 1 (Prpsap1) (Rattus norvegicus (Rat)).